The chain runs to 172 residues: Bone marrow stromal antigen 2 (172 aa).

At 1 to 26 (MAPSFYHYLPVAMDERWEPKGWSIRR) the chain is on the cytoplasmic side. Lys20 is covalently cross-linked (Glycyl lysine isopeptide (Lys-Gly) (interchain with G-Cter in ubiquitin)). Residues 27–47 (WWLVAAILVVLIGVVLVCLIV) traverse the membrane as a helical; Signal-anchor for type II membrane protein segment. Residues 48-152 (YFANAAHSEA…EISTTVQVNS (105 aa)) are Extracellular-facing. Asn70 and Asn97 each carry an N-linked (GlcNAc...) asparagine glycan. Positions 103–149 (LRDSLKKKVSQTQEQQARIKELENKIERLNQELENLRTQKEISTTVQ) form a coiled coil. Ser152 carries GPI-anchor amidated serine lipidation. A propeptide spans 153–172 (GGSVVVSSLLVLVAVLFLHF) (removed in mature form).

Parallel homodimer; disulfide-linked. May form homotetramers under reducing conditions. Isoform 1 and isoform 2 form homodimers and also heterodimers with each other. Dimerization is essential for its antiviral activity. Interacts (via cytoplasmic domain) with ARHGAP44. Interacts with MMP14 (via C-terminal cytoplasmic tail). Interacts with LILRA4/ILT7. Interacts with RNF115. In terms of processing, N-glycosylated. The GPI anchor is essential for its antiviral activity. In terms of tissue distribution, ubiquitously expressed, with highest levels in brain and liver. Present in liver (at protein level).

The protein resides in the golgi apparatus. Its subcellular location is the trans-Golgi network. The protein localises to the cell membrane. It localises to the late endosome. It is found in the membrane raft. The protein resides in the cytoplasm. Its subcellular location is the apical cell membrane. Its function is as follows. IFN-induced antiviral host restriction factor which efficiently blocks the release of diverse mammalian enveloped viruses by directly tethering nascent virions to the membranes of infected cells. Acts as a direct physical tether, holding virions to the cell membrane and linking virions to each other. The tethered virions can be internalized by endocytosis and subsequently degraded or they can remain on the cell surface. In either case, their spread as cell-free virions is restricted. Its target viruses belong to diverse families, including retroviridae: human immunodeficiency virus type 1 (HIV-1), mouse mammary tumor virus (MMTV) and murine leukemia virus (MLV), filoviridae: ebola virus (EBOV), arenaviridae: lassa virus (LASV), and rhabdoviridae: vesicular stomatitis virus (VSV). Can inhibit cell surface proteolytic activity of MMP14 causing decreased activation of MMP15 which results in inhibition of cell growth and migration. Can stimulate signaling by LILRA4/ILT7 and consequently provide negative feedback to the production of IFN by plasmacytoid dendritic cells in response to viral infection. Plays a role in the organization of the subapical actin cytoskeleton in polarized epithelial cells. This Rattus norvegicus (Rat) protein is Bone marrow stromal antigen 2 (Bst2).